Reading from the N-terminus, the 173-residue chain is Large ribosomal subunit protein bL9 (173 aa).

The tract at residues 151-173 (YDDTPDRTETEESTKELQEEHAE) is disordered.

This sequence belongs to the bacterial ribosomal protein bL9 family.

In terms of biological role, binds to the 23S rRNA. This chain is Large ribosomal subunit protein bL9, found in Lawsonia intracellularis (strain PHE/MN1-00).